A 441-amino-acid chain; its full sequence is Growth/differentiation factor 9 (441 aa).

Residues Met1–Thr29 form the signal peptide. A propeptide spanning residues Glu30 to Arg306 is cleaved from the precursor. Asn163, Asn229, Asn258, and Asn325 each carry an N-linked (GlcNAc...) asparagine glycan. 3 disulfides stabilise this stretch: Cys340–Cys406, Cys369–Cys438, and Cys373–Cys440.

The protein belongs to the TGF-beta family. In terms of assembly, homodimer or heterodimer (Potential). But, in contrast to other members of this family, cannot be disulfide-linked. Phosphorylated; phosphorylation is critical for GDF9 function. In terms of tissue distribution, ovary. Strongly expressed in germinal vesicle (GV) stage oocytes, MII-stage oocytes and in zygotes.

The protein resides in the secreted. Its function is as follows. Required for ovarian folliculogenesis. The chain is Growth/differentiation factor 9 (Gdf9) from Mus musculus (Mouse).